Here is a 292-residue protein sequence, read N- to C-terminus: Ventral anterior homeobox 2 (292 aa).

A compositionally biased stretch (basic and acidic residues) spans 1-36 (MGDGGAERDRGPKRREEPGGRSGCRGEHRGAEDLRA). The tract at residues 1–74 (MGDGGAERDR…DGQQALGETD (74 aa)) is disordered. Polar residues predominate over residues 38–55 (TGSTSPREIAGTSASSPA). A DNA-binding region (homeobox) is located at residues 102–161 (PKRTRTSFTAEQLYRLEMEFQRCQYVVGRERTELARQLNLSETQVKVWFQNRRTKQKKDQ). The tract at residues 212 to 241 (AGHRGTSLGDPRNSSQRLNPMPSASASSPL) is disordered.

This sequence belongs to the EMX homeobox family.

Its subcellular location is the nucleus. Its function is as follows. Transcription factor that may function in dorsoventral specification of the forebrain. Regulates the expression of Wnt signaling antagonists including the expression of a truncated TCF7L2 isoform that cannot bind CTNNB1 and acts therefore as a potent dominant-negative Wnt antagonist. Plays a crucial role in eye development and, in particular, in the specification of the ventral optic vesicle. May be a regulator of axial polarization in the retina. The polypeptide is Ventral anterior homeobox 2 (Vax2) (Rattus norvegicus (Rat)).